We begin with the raw amino-acid sequence, 202 residues long: Kunitz trypsin inhibitor 7 (202 aa).

Residues 1 to 25 (MKTFRSMLISLLLVAITTTSGVVEG) form the signal peptide. The cysteines at positions 69 and 115 are disulfide-linked. N-linked (GlcNAc...) asparagine glycosylation is found at Asn93, Asn136, Asn144, and Asn198.

The protein belongs to the protease inhibitor I3 (leguminous Kunitz-type inhibitor) family.

Exhibits Kunitz trypsin protease inhibitor activity. In Arabidopsis thaliana (Mouse-ear cress), this protein is Kunitz trypsin inhibitor 7.